The primary structure comprises 299 residues: Diaminopimelate epimerase (299 aa).

Asparagine 15, glutamine 47, and asparagine 67 together coordinate substrate. Residue cysteine 76 is the Proton donor of the active site. Residues 77–78 (GN), asparagine 163, asparagine 197, and 215–216 (ER) contribute to the substrate site. The Proton acceptor role is filled by cysteine 224. A substrate-binding site is contributed by 225–226 (GS).

This sequence belongs to the diaminopimelate epimerase family. Homodimer.

Its subcellular location is the cytoplasm. The enzyme catalyses (2S,6S)-2,6-diaminopimelate = meso-2,6-diaminopimelate. Its pathway is amino-acid biosynthesis; L-lysine biosynthesis via DAP pathway; DL-2,6-diaminopimelate from LL-2,6-diaminopimelate: step 1/1. Catalyzes the stereoinversion of LL-2,6-diaminopimelate (L,L-DAP) to meso-diaminopimelate (meso-DAP), a precursor of L-lysine and an essential component of the bacterial peptidoglycan. This chain is Diaminopimelate epimerase, found in Agrobacterium fabrum (strain C58 / ATCC 33970) (Agrobacterium tumefaciens (strain C58)).